The chain runs to 465 residues: 6-phospho-beta-glucosidase GmuD (465 aa).

Glu-170 acts as the Proton donor in catalysis. The active-site Nucleophile is the Glu-368.

Belongs to the glycosyl hydrolase 1 family.

The enzyme catalyses 6-phospho-beta-D-glucosyl-(1-&gt;4)-D-glucose + H2O = D-glucose 6-phosphate + D-glucose. Functionally, phospho-beta-D-glucosidase that seems to be involved in the degradation of glucomannan. Is also capable of hydrolyzing aryl-phospho-beta-D-glucosides, although very weakly, and plays only a minor role, if any, in the degradation of these substrates in vivo. This Bacillus subtilis (strain 168) protein is 6-phospho-beta-glucosidase GmuD (gmuD).